Here is a 242-residue protein sequence, read N- to C-terminus: Probable transcriptional regulatory protein mhp472 (242 aa).

This sequence belongs to the TACO1 family.

The protein localises to the cytoplasm. This Mesomycoplasma hyopneumoniae (strain 232) (Mycoplasma hyopneumoniae) protein is Probable transcriptional regulatory protein mhp472.